Reading from the N-terminus, the 500-residue chain is Putative (R)-citramalate synthase CimA (500 aa).

Residues 9–258 (LRFFDTTLRD…DTRIRTERLY (250 aa)) enclose the Pyruvate carboxyltransferase domain.

Belongs to the alpha-IPM synthase/homocitrate synthase family. As to quaternary structure, homodimer.

The catalysed reaction is pyruvate + acetyl-CoA + H2O = (3R)-citramalate + CoA + H(+). It functions in the pathway amino-acid biosynthesis; L-isoleucine biosynthesis; 2-oxobutanoate from pyruvate: step 1/3. Its function is as follows. Catalyzes the condensation of pyruvate and acetyl-coenzyme A to form (R)-citramalate. The sequence is that of Putative (R)-citramalate synthase CimA from Methanosphaerula palustris (strain ATCC BAA-1556 / DSM 19958 / E1-9c).